The following is a 459-amino-acid chain: MDDPNSYDVIIVGTNLRNSILSAALSWANQRVLHIDENSFYGEIDGSLTLRDLEQINEKIKKVDSSQILNDNGSHKSPLKRFEVQFLNKDLIPKNKGSVIQFHPQEIFASSELVKLLSETKIYKYLLLKPARSFRLLTSNEEWIKVPESRADIFNNKNLSLASKRIVMRFMKFVSNIADEQNQNLVKEWESKPFYKFLEEVFQLSGAIEESIIYGLCQSLSKDIPTKDALDTVLKYFHSFGMYGDYSYLLAMYGTGSELCQGFCRSSAVMGGTFMLGQAIDKIDESKIVLKDGSTLSAKKIVSSVDEGKLPHQQIQQRYLLVKGDCQQLFQEDGFFAALDASLIHFSPFSISENFGNSVQAKLYGSGSGDCPEGYCIWYLKTLNDSPCNEVFNLATKKLCSFSGCDDLEIIVQVDETLNQLRHIDYDDTLHSAKSLFYEILGQNNTFLQREGLFDEDDE.

It belongs to the Rab GDI family.

It localises to the cytoplasm. Its subcellular location is the nucleus. This is an uncharacterized protein from Schizosaccharomyces pombe (strain 972 / ATCC 24843) (Fission yeast).